Reading from the N-terminus, the 898-residue chain is Chloride channel protein 2 (898 aa).

An N-acetylalanine modification is found at alanine 2. At alanine 2–valine 87 the chain is on the cytoplasmic side. An essential for channel gating by both voltage and cell volume region spans residues glutamine 16–alanine 34. Threonine 20 carries the phosphothreonine modification. The segment at glutamate 36–tryptophan 49 is modulates channel gating by both voltage and cell volume. Transmembrane regions (helical) follow at residues glycine 88–tryptophan 121 and isoleucine 130–leucine 155. Positions glycine 161 to proline 165 match the Selectivity filter part_1 motif. Serine 162 lines the chloride pocket. The helical intramembrane region spans isoleucine 164–leucine 171. 2 helical membrane passes run leucine 180–serine 198 and glutamate 205–leucine 223. The Selectivity filter part_2 motif lies at glycine 203–proline 207. Intramembrane regions (helical) lie at residues methionine 239 to cysteine 251 and proline 255 to isoleucine 263. 5 helical membrane-spanning segments follow: residues tyrosine 275–tryptophan 295, leucine 321–methionine 349, phenylalanine 358–leucine 377, alanine 429–alanine 449, and glycine 457–tryptophan 480. Positions glycine 457–proline 461 match the Selectivity filter part_3 motif. Position 459 (phenylalanine 459) interacts with chloride. The segment at residues glycine 497–valine 511 is an intramembrane region (helical). The note=Loop between two helices intramembrane region spans threonine 512–histidine 513. An intramembrane region (helical) is located at residues threonine 514–threonine 525. Positions glycine 526 to histidine 530 form an intramembrane region, note=Loop between two helices. The chain crosses the membrane as a helical span at residues isoleucine 531–leucine 548. Over glutamine 549–glutamine 898 the chain is Cytoplasmic. Tyrosine 553 contacts chloride. Residues methionine 584–proline 642 enclose the CBS 1 domain. Disordered regions lie at residues alanine 643 to serine 672 and alanine 686 to alanine 717. A compositionally biased stretch (polar residues) spans valine 705 to alanine 717. Phosphoserine occurs at positions 712 and 758. The 61-residue stretch at isoleucine 790 to valine 850 folds into the CBS 2 domain. Positions leucine 812–leucine 813 match the Basolateral membrane sorting motif. Residues serine 856–glutamine 898 are disordered.

Belongs to the chloride channel (TC 2.A.49) family. ClC-2/CLCN2 subfamily. In terms of assembly, homodimer. Interacts with auxiliary subunit HEPACAM. Post-translationally, phosphorylated. Activated by dephosphorylation. Ubiquitously expressed. Moderately expressed in aortic and coronary vascular smooth muscle cells and expressed at a low level in aortic endothelial cells. Expressed in the adrenal gland, predominantly in the zona glomerulosa. Expressed in white mater perivascular astrocytes and ependymal cells (at protein level).

It is found in the cell membrane. The protein localises to the basolateral cell membrane. It localises to the cell projection. The protein resides in the dendritic spine membrane. Its subcellular location is the axon. It catalyses the reaction chloride(in) = chloride(out). The catalysed reaction is thiocyanate(in) = thiocyanate(out). It carries out the reaction bromide(in) = bromide(out). The enzyme catalyses nitrate(in) = nitrate(out). It catalyses the reaction iodide(out) = iodide(in). With respect to regulation, common gate kinetics are down-regulated by intracellular ATP. Inhibited by AK-42, a derivative of meclofenamate. Inhibited by Cd(2+). Inhibited by Zn(2+) and PKC activation. Inhibited at acidic pH. CCLN2:HEPACAM channel conductance is up-regulated upon hypo-osmolarity. Its function is as follows. Voltage-gated and osmosensitive chloride channel. Forms a homodimeric channel where each subunit has its own ion conduction pathway. Conducts double-barreled currents controlled by two types of gates, two fast glutamate gates that control each subunit independently and a slow common gate that opens and shuts off both subunits simultaneously. Displays inward rectification currents activated upon membrane hyperpolarization and extracellular hypotonicity. Contributes to chloride conductance involved in neuron excitability. In hippocampal neurons, generates a significant part of resting membrane conductance and provides an additional chloride efflux pathway to prevent chloride accumulation in dendrites upon GABA receptor activation. In glia, associates with the auxiliary subunit HEPACAM/GlialCAM at astrocytic processes and myelinated fiber tracts where it may regulate transcellular chloride flux buffering extracellular chloride and potassium concentrations. Regulates aldosterone production in adrenal glands. The opening of CLCN2 channels at hyperpolarized membrane potentials in the glomerulosa causes cell membrane depolarization, activation of voltage-gated calcium channels and increased expression of aldosterone synthase, the rate-limiting enzyme for aldosterone biosynthesis. Contributes to chloride conductance in retinal pigment epithelium involved in phagocytosis of shed photoreceptor outer segments and photoreceptor renewal. Conducts chloride currents at the basolateral membrane of epithelial cells with a role in chloride reabsorption rather than secretion. Permeable to small monovalent anions with chloride &gt; thiocyanate &gt; bromide &gt; nitrate &gt; iodide ion selectivity. The sequence is that of Chloride channel protein 2 from Homo sapiens (Human).